A 372-amino-acid polypeptide reads, in one-letter code: Glycerophosphodiester phosphodiesterase GDPD6 (372 aa).

An N-terminal signal peptide occupies residues 1–21 (MAFKYLLPLLLLSLLVANCAS). A disordered region spans residues 32–58 (KHATKKPLQTSRPYNLAHRGSNGELPE). The 319-residue stretch at 44-362 (PYNLAHRGSN…DFTGSLHNYQ (319 aa)) folds into the GP-PDE domain. N120, N239, and N260 each carry an N-linked (GlcNAc...) asparagine glycan.

Belongs to the glycerophosphoryl diester phosphodiesterase family. As to expression, expressed in flowers and siliques.

It carries out the reaction a sn-glycero-3-phosphodiester + H2O = an alcohol + sn-glycerol 3-phosphate + H(+). This Arabidopsis thaliana (Mouse-ear cress) protein is Glycerophosphodiester phosphodiesterase GDPD6.